Reading from the N-terminus, the 185-residue chain is Pericyclase pydY (185 aa).

It belongs to the pericyclase pydY family.

The protein operates within mycotoxin biosynthesis. Functionally, pericyclase; part of the gene cluster that mediates the biosynthesis of pyrrocidines, fungal natural products containing a macrocyclic para-cyclophane connected to a decahydrofluorene ring system that show potent antibiotic activities toward Gram-negative bacteria. Within the pathway, pydY is involved in the late Diels-Alder cycloaddition step that leads to the formation of the decahydrofluorene core. The pathway begins with the PKS-NRPS pydA which, with the help of the trans-enoyl reductase pydC, synthesizes the polyketide-tyrosyl acyl thioester product which can be reductively off-loaded by the terminal reductase (R) domain in pydA. The alpha/beta hydrolase pydG is then required to catalyze the subsequent Knoevenagel condensation that affords the 3-pyrrolin-2-one ring, whereas the four proteins pydB, pydE, pydX and pydZ then function synergistically to form the cyclophane. PydB and the membrane-bound pydX and pydZ are lipid-binding proteins that can sequester and mold the pdyG product into the inverse S-shape. Binding of the medium chain reductase pydE to the complex would trigger the cascade oxidative cyclization. PydY is involved in the Diels-Alder cycloaddition that forms the decahydrofluorene core. Additional non-enzymatic hydroxylation yields pyrrocidine A2 which can be further reduced into pyrrocidine B by an endogenous reductase. In Acremonium sp, this protein is Pericyclase pydY.